A 501-amino-acid polypeptide reads, in one-letter code: Lysine--tRNA ligase (501 aa).

Residues Glu-411 and Glu-418 each contribute to the Mg(2+) site.

This sequence belongs to the class-II aminoacyl-tRNA synthetase family. In terms of assembly, homodimer. Mg(2+) serves as cofactor.

It is found in the cytoplasm. It catalyses the reaction tRNA(Lys) + L-lysine + ATP = L-lysyl-tRNA(Lys) + AMP + diphosphate. The protein is Lysine--tRNA ligase of Pseudomonas aeruginosa (strain ATCC 15692 / DSM 22644 / CIP 104116 / JCM 14847 / LMG 12228 / 1C / PRS 101 / PAO1).